The sequence spans 70 residues: MKKDIHPKYEEITATCSCGNVMKINSTAGHNLNLDVCDKCHPFYTGKQRDVATGGRVDLFNKRFKIPGSK.

Cys16, Cys18, Cys37, and Cys40 together coordinate Zn(2+).

Belongs to the bacterial ribosomal protein bL31 family. Type A subfamily. As to quaternary structure, part of the 50S ribosomal subunit. Zn(2+) is required as a cofactor.

Functionally, binds the 23S rRNA. This is Large ribosomal subunit protein bL31 from Proteus mirabilis (strain HI4320).